Here is a 182-residue protein sequence, read N- to C-terminus: Isopentenyl-diphosphate Delta-isomerase (182 aa).

The Mn(2+) site is built by His25 and His32. One can recognise a Nudix hydrolase domain in the interval 30-164 (RLHLAFSSWL…PWAFSPWMVM (135 aa)). Cys67 is a catalytic residue. A Mn(2+)-binding site is contributed by His69. Position 87 (Glu87) interacts with Mg(2+). Residues Glu114 and Glu116 each contribute to the Mn(2+) site. Residue Glu116 is part of the active site.

Belongs to the IPP isomerase type 1 family. Homodimer. Requires Mg(2+) as cofactor. Mn(2+) serves as cofactor.

The protein resides in the cytoplasm. The catalysed reaction is isopentenyl diphosphate = dimethylallyl diphosphate. Its pathway is isoprenoid biosynthesis; dimethylallyl diphosphate biosynthesis; dimethylallyl diphosphate from isopentenyl diphosphate: step 1/1. Functionally, catalyzes the 1,3-allylic rearrangement of the homoallylic substrate isopentenyl (IPP) to its highly electrophilic allylic isomer, dimethylallyl diphosphate (DMAPP). The polypeptide is Isopentenyl-diphosphate Delta-isomerase (Escherichia coli O139:H28 (strain E24377A / ETEC)).